The sequence spans 326 residues: Peroxidase 3 (326 aa).

The first 24 residues, Met-1 to Ala-24, serve as a signal peptide directing secretion. 4 cysteine pairs are disulfide-bonded: Cys-35–Cys-113, Cys-68–Cys-73, Cys-119–Cys-321, and Cys-198–Cys-231. The active-site Proton acceptor is the His-66. Residues Asp-67, Val-70, Gly-72, Asp-74, and Ser-76 each coordinate Ca(2+). N-linked (GlcNAc...) asparagine glycosylation is found at Asn-80 and Asn-138. Residue Pro-161 participates in substrate binding. Asn-166 carries an N-linked (GlcNAc...) asparagine glycan. His-191 provides a ligand contact to heme b. Thr-192 provides a ligand contact to Ca(2+). N-linked (GlcNAc...) asparagine glycosylation is found at Asn-207 and Asn-237. The Ca(2+) site is built by Asp-244, Ser-247, and Asp-252.

Belongs to the peroxidase family. Classical plant (class III) peroxidase subfamily. It depends on heme b as a cofactor. Ca(2+) serves as cofactor. As to expression, expressed in root cells.

It localises to the secreted. The catalysed reaction is 2 a phenolic donor + H2O2 = 2 a phenolic radical donor + 2 H2O. Functionally, removal of H(2)O(2), oxidation of toxic reductants, biosynthesis and degradation of lignin, suberization, auxin catabolism, response to environmental stresses such as wounding, pathogen attack and oxidative stress. These functions might be dependent on each isozyme/isoform in each plant tissue. This is Peroxidase 3 (PER3) from Arabidopsis thaliana (Mouse-ear cress).